The chain runs to 122 residues: Large ribosomal subunit protein uL14 (122 aa).

This sequence belongs to the universal ribosomal protein uL14 family. As to quaternary structure, part of the 50S ribosomal subunit. Forms a cluster with proteins L3 and L19. In the 70S ribosome, L14 and L19 interact and together make contacts with the 16S rRNA in bridges B5 and B8.

Functionally, binds to 23S rRNA. Forms part of two intersubunit bridges in the 70S ribosome. The chain is Large ribosomal subunit protein uL14 from Clavibacter michiganensis subsp. michiganensis (strain NCPPB 382).